The primary structure comprises 149 residues: 3-dehydroquinate dehydratase (149 aa).

Tyr23 serves as the catalytic Proton acceptor. Substrate contacts are provided by Asn74, His80, and Asp87. Residue His100 is the Proton donor of the active site. Residues 101 to 102 (LS) and Arg111 each bind substrate.

The protein belongs to the type-II 3-dehydroquinase family. In terms of assembly, homododecamer.

The enzyme catalyses 3-dehydroquinate = 3-dehydroshikimate + H2O. Its pathway is metabolic intermediate biosynthesis; chorismate biosynthesis; chorismate from D-erythrose 4-phosphate and phosphoenolpyruvate: step 3/7. In terms of biological role, catalyzes a trans-dehydration via an enolate intermediate. The sequence is that of 3-dehydroquinate dehydratase from Ruegeria pomeroyi (strain ATCC 700808 / DSM 15171 / DSS-3) (Silicibacter pomeroyi).